A 1154-amino-acid polypeptide reads, in one-letter code: Large proline-rich protein BAG6 (1154 aa).

Met1 is modified (N-acetylmethionine). The 76-residue stretch at 17-92 (LEVLVKTLDS…HLVERAPPQT (76 aa)) folds into the Ubiquitin-like domain. 5 disordered regions span residues 87 to 125 (RAPP…ASVH), 186 to 274 (RGGT…HPSP), 387 to 442 (TMTG…SSHP), 463 to 531 (QDSG…QGAG), and 568 to 626 (AQAQ…SAAD). Phosphoserine is present on Ser96. The segment covering 96–112 (SGASSGTGSASATHGGA) has biased composition (low complexity). Thr117 is modified (phosphothreonine). Polar residues predominate over residues 209-218 (VALNSQTSEP). Repeat unit 1 spans residues 237–271 (RPPTQTPELAPSGPAPAGPAPAGPAPAPETNAPNH). Positions 237 to 658 (RPPTQTPELA…MASPTITVAM (422 aa)) are 4 X 29 AA approximate repeats. A compositionally biased stretch (pro residues) spans 249-263 (GPAPAGPAPAGPAPA). Over residues 400 to 409 (GAEAATPGSA) the composition is skewed to low complexity. Over residues 410–426 (QATSLPPSSTTVDSSTE) the composition is skewed to polar residues. Residues 416 to 444 (PSSTTVDSSTEGAPPPGPAPPPASSHPRV) form repeat 2. Composition is skewed to pro residues over residues 428 to 439 (APPPGPAPPPAS) and 508 to 521 (PTPP…PGGP). 2 stretches are compositionally biased toward low complexity: residues 568–581 (AQAQ…AQAP) and 591–609 (PATA…TAGP). 2 tandem repeats follow at residues 597–624 (SAGT…QPSA) and 630–658 (SQLL…TVAM). Residues 611-622 (PGGPAQPPPPQP) are compositionally biased toward pro residues. 2 disordered regions span residues 673–719 (QASQ…ESLP) and 968–1154 (PPQT…ADDP). Pro residues predominate over residues 678–702 (APPPPPPPPPPPPAPEQQSTPPPGS). Ser986 and Ser995 each carry phosphoserine. The segment covering 1029–1042 (AEPWAAAVPPEWVP) has biased composition (low complexity). The interval 1032-1062 (WAAAVPPEWVPIIQQDIQSQRKVKPQPPLSD) is required for interaction with GET4. The short motif at 1034–1076 (AAVPPEWVPIIQQDIQSQRKVKPQPPLSDAYLSGMPAKRRKTM) is the Nuclear localization site element. Residues 1044–1154 (IQQDIQSQRK…NAHRAFADDP (111 aa)) are sufficient for the delivery of client proteins to the endoplasmic reticulum. The residue at position 1075 (Thr1075) is a Phosphothreonine. The BAG-similar domain, required and sufficient for interaction with UBL4A stretch occupies residues 1080 to 1137 (GPQLLLSEAVSRAAKAAGARPLTSPESLSRDLEAPEVQESYRQQLRSDIQKRLQEDPN). Residues 1088–1098 (AVSRAAKAAGA) are compositionally biased toward low complexity. Phosphoserine occurs at positions 1103 and 1139.

As to quaternary structure, component of the BAG6/BAT3 complex, also named BAT3 complex, at least composed of BAG6, UBL4A and GET4/TRC35. Interacts with GET4; the interaction is direct and localizes BAG6 in the cytosol. Interacts with UBL4A; the interaction is direct and required for UBL4A protein stability. Interacts with AIFM1. Interacts with HSPA2. Interacts with CTCFL. Interacts with p300/EP300. Interacts (via ubiquitin-like domain) with RNF126; required for BAG6-dependent ubiquitination of proteins mislocalized to the cytosol. Interacts (via ubiquitin-like domain) with SGTA; SGTA competes with RNF126 by binding the same region of BAG6, thereby promoting deubiquitination of BAG6-target proteins and rescuing them from degradation. Interacts with ricin A chain. Interacts with VCP and AMFR; both form the VCP/p97-AMFR/gp78 complex. Interacts with SYVN1. Interacts with USP13; the interaction is direct and may mediate UBL4A deubiquitination. Interacts with ZFAND2B. Interacts with KPNA2. Interacts with UBQLN4. Post-translationally, ricin can induce a cleavage by the caspase CASP3. The released C-terminal peptide induces apoptosis.

The protein localises to the cytoplasm. It localises to the cytosol. It is found in the nucleus. Its subcellular location is the secreted. The protein resides in the extracellular exosome. In terms of biological role, ATP-independent molecular chaperone preventing the aggregation of misfolded and hydrophobic patches-containing proteins. Functions as part of a cytosolic protein quality control complex, the BAG6/BAT3 complex, which maintains these client proteins in a soluble state and participates in their proper delivery to the endoplasmic reticulum or alternatively can promote their sorting to the proteasome where they undergo degradation. The BAG6/BAT3 complex is involved in the post-translational delivery of tail-anchored/type II transmembrane proteins to the endoplasmic reticulum membrane. Recruited to ribosomes, it interacts with the transmembrane region of newly synthesized tail-anchored proteins and together with SGTA and ASNA1 mediates their delivery to the endoplasmic reticulum. Client proteins that cannot be properly delivered to the endoplasmic reticulum are ubiquitinated by RNF126, an E3 ubiquitin-protein ligase associated with BAG6 and are sorted to the proteasome. SGTA which prevents the recruitment of RNF126 to BAG6 may negatively regulate the ubiquitination and the proteasomal degradation of client proteins. Similarly, the BAG6/BAT3 complex also functions as a sorting platform for proteins of the secretory pathway that are mislocalized to the cytosol either delivering them to the proteasome for degradation or to the endoplasmic reticulum. The BAG6/BAT3 complex also plays a role in the endoplasmic reticulum-associated degradation (ERAD), a quality control mechanism that eliminates unwanted proteins of the endoplasmic reticulum through their retrotranslocation to the cytosol and their targeting to the proteasome. It maintains these retrotranslocated proteins in an unfolded yet soluble state condition in the cytosol to ensure their proper delivery to the proteasome. BAG6 is also required for selective ubiquitin-mediated degradation of defective nascent chain polypeptides by the proteasome. In this context, it may participate in the production of antigenic peptides and play a role in antigen presentation in immune response. BAG6 is also involved in endoplasmic reticulum stress-induced pre-emptive quality control, a mechanism that selectively attenuates the translocation of newly synthesized proteins into the endoplasmic reticulum and reroutes them to the cytosol for proteasomal degradation. BAG6 may ensure the proper degradation of these proteins and thereby protects the endoplasmic reticulum from protein overload upon stress. By inhibiting the polyubiquitination and subsequent proteasomal degradation of HSPA2 it may also play a role in the assembly of the synaptonemal complex during spermatogenesis. Also positively regulates apoptosis by interacting with and stabilizing the proapoptotic factor AIFM1. By controlling the steady-state expression of the IGF1R receptor, indirectly regulates the insulin-like growth factor receptor signaling pathway. Functionally, involved in DNA damage-induced apoptosis: following DNA damage, accumulates in the nucleus and forms a complex with p300/EP300, enhancing p300/EP300-mediated p53/TP53 acetylation leading to increase p53/TP53 transcriptional activity. When nuclear, may also act as a component of some chromatin regulator complex that regulates histone 3 'Lys-4' dimethylation (H3K4me2). Its function is as follows. Released extracellularly via exosomes, it is a ligand of the natural killer/NK cells receptor NCR3 and stimulates NK cells cytotoxicity. It may thereby trigger NK cells cytotoxicity against neighboring tumor cells and immature myeloid dendritic cells (DC). May mediate ricin-induced apoptosis. The protein is Large proline-rich protein BAG6 of Mus musculus (Mouse).